The following is a 500-amino-acid chain: L-arabinose isomerase (500 aa).

Mn(2+)-binding residues include glutamate 306, glutamate 333, histidine 350, and histidine 450.

The protein belongs to the arabinose isomerase family. Homohexamer. Mn(2+) serves as cofactor.

It catalyses the reaction beta-L-arabinopyranose = L-ribulose. It participates in carbohydrate degradation; L-arabinose degradation via L-ribulose; D-xylulose 5-phosphate from L-arabinose (bacterial route): step 1/3. Its function is as follows. Catalyzes the conversion of L-arabinose to L-ribulose. This is L-arabinose isomerase from Yersinia pestis (strain Pestoides F).